The primary structure comprises 443 residues: Transmembrane protein 184C (443 aa).

7 consecutive transmembrane segments (helical) span residues 15–35 (LVVL…IWKL), 46–66 (AWFI…WGIL), 84–104 (ILWM…YPDI), 182–202 (PVTT…EGDF), 210–230 (YLVI…VLFY), 252–272 (VVFV…AGVI), and 284–304 (VATG…AVAH). Residues 369–378 (TSLLSSSTQD) are compositionally biased toward polar residues. A disordered region spans residues 369–422 (TSLLSSSTQDPISAASSIPPSPSGHYQGFGQTITPQTTPTATTMPEELYSADSP). Residues 399 to 411 (QTITPQTTPTATT) show a composition bias toward low complexity.

This sequence belongs to the TMEM184 family.

Its subcellular location is the membrane. Its function is as follows. May play a role in cell growth. In Xenopus tropicalis (Western clawed frog), this protein is Transmembrane protein 184C (tmem184c).